The chain runs to 132 residues: Probable histone H2A.1 (132 aa).

The interval 1 to 22 (MAGRGKTLGSGSAKKATTRSSK) is disordered.

Belongs to the histone H2A family. As to quaternary structure, the nucleosome is a histone octamer containing two molecules each of H2A, H2B, H3 and H4 assembled in one H3-H4 heterotetramer and two H2A-H2B heterodimers. The octamer wraps approximately 147 bp of DNA. Post-translationally, not ubiquitinated. In terms of tissue distribution, low level of expression; mainly in roots. Found in the root cap cells and in non dividing tissues of the plant, including the root elongation and maturation zones and the leaf veins.

It localises to the nucleus. The protein localises to the chromosome. In terms of biological role, core component of nucleosome. Nucleosomes wrap and compact DNA into chromatin, limiting DNA accessibility to the cellular machineries which require DNA as a template. Histones thereby play a central role in transcription regulation, DNA repair, DNA replication and chromosomal stability. DNA accessibility is regulated via a complex set of post-translational modifications of histones, also called histone code, and nucleosome remodeling. The chain is Probable histone H2A.1 from Arabidopsis thaliana (Mouse-ear cress).